Reading from the N-terminus, the 963-residue chain is Protein translocase subunit SecA (963 aa).

Residues Gln-87, 105 to 109 (GEGKT), and Asp-524 each bind ATP. Cys-946, Cys-948, Cys-957, and His-958 together coordinate Zn(2+).

This sequence belongs to the SecA family. As to quaternary structure, monomer and homodimer. Part of the essential Sec protein translocation apparatus which comprises SecA, SecYEG and auxiliary proteins SecDF-YajC and YidC. Zn(2+) is required as a cofactor.

It is found in the cell inner membrane. It localises to the cytoplasm. It carries out the reaction ATP + H2O + cellular proteinSide 1 = ADP + phosphate + cellular proteinSide 2.. Its function is as follows. Part of the Sec protein translocase complex. Interacts with the SecYEG preprotein conducting channel. Has a central role in coupling the hydrolysis of ATP to the transfer of proteins into and across the cell membrane, serving both as a receptor for the preprotein-SecB complex and as an ATP-driven molecular motor driving the stepwise translocation of polypeptide chains across the membrane. The polypeptide is Protein translocase subunit SecA (Methylobacterium radiotolerans (strain ATCC 27329 / DSM 1819 / JCM 2831 / NBRC 15690 / NCIMB 10815 / 0-1)).